A 104-amino-acid chain; its full sequence is Large ribosomal subunit protein uL24 (104 aa).

The protein belongs to the universal ribosomal protein uL24 family. In terms of assembly, part of the 50S ribosomal subunit.

One of two assembly initiator proteins, it binds directly to the 5'-end of the 23S rRNA, where it nucleates assembly of the 50S subunit. Functionally, one of the proteins that surrounds the polypeptide exit tunnel on the outside of the subunit. The polypeptide is Large ribosomal subunit protein uL24 (Yersinia enterocolitica serotype O:8 / biotype 1B (strain NCTC 13174 / 8081)).